The sequence spans 471 residues: Probable flavin-containing monoamine oxidase B (471 aa).

Residue C406 is modified to S-8alpha-FAD cysteine.

It belongs to the flavin monoamine oxidase family. The cofactor is FAD.

The catalysed reaction is a secondary aliphatic amine + O2 + H2O = a primary amine + an aldehyde + H2O2. The polypeptide is Probable flavin-containing monoamine oxidase B (maoB-1) (Dictyostelium discoideum (Social amoeba)).